The sequence spans 362 residues: tRNA-specific 2-thiouridylase MnmA 1 (362 aa).

Residues 12-19 (GMSGGVDS) and Met-38 each bind ATP. Residue Cys-104 is the Nucleophile of the active site. A disulfide bridge connects residues Cys-104 and Cys-200. Gly-128 provides a ligand contact to ATP. An interaction with tRNA region spans residues 150-152 (KDQ). Cys-200 (cysteine persulfide intermediate) is an active-site residue. Residues 306–307 (RY) are interaction with tRNA.

It belongs to the MnmA/TRMU family.

The protein resides in the cytoplasm. The enzyme catalyses S-sulfanyl-L-cysteinyl-[protein] + uridine(34) in tRNA + AH2 + ATP = 2-thiouridine(34) in tRNA + L-cysteinyl-[protein] + A + AMP + diphosphate + H(+). In terms of biological role, catalyzes the 2-thiolation of uridine at the wobble position (U34) of tRNA, leading to the formation of s(2)U34. The polypeptide is tRNA-specific 2-thiouridylase MnmA 1 (Clostridium tetani (strain Massachusetts / E88)).